Reading from the N-terminus, the 473-residue chain is 3-isopropylmalate dehydratase large subunit (473 aa).

Residues C351, C414, and C417 each coordinate [4Fe-4S] cluster.

It belongs to the aconitase/IPM isomerase family. LeuC type 1 subfamily. Heterodimer of LeuC and LeuD. Requires [4Fe-4S] cluster as cofactor.

The catalysed reaction is (2R,3S)-3-isopropylmalate = (2S)-2-isopropylmalate. Its pathway is amino-acid biosynthesis; L-leucine biosynthesis; L-leucine from 3-methyl-2-oxobutanoate: step 2/4. Catalyzes the isomerization between 2-isopropylmalate and 3-isopropylmalate, via the formation of 2-isopropylmaleate. The sequence is that of 3-isopropylmalate dehydratase large subunit from Acidovorax ebreus (strain TPSY) (Diaphorobacter sp. (strain TPSY)).